We begin with the raw amino-acid sequence, 723 residues long: Hypoxia-inducible factor prolyl hydroxylase (723 aa).

8 residues coordinate Zn(2+): Cys-39, Cys-42, Cys-54, Cys-57, Cys-63, His-67, His-75, and Cys-79. The MYND-type; atypical zinc-finger motif lies at 39 to 79; sequence CTYCGSSCTSSQLQTCLFCGTVAYCSKEHQQLDWLTHKMIC. Over residues 249-270 the composition is skewed to low complexity; the sequence is PSTASTATIPPPATTTSSATSS. Disordered stretches follow at residues 249 to 275 and 294 to 323; these read PSTA…KSET and IETE…KINY. Residues 468–566 form the Fe2OG dioxygenase domain; that stretch reads GRSRAMLAIY…RFAITIWYMD (99 aa). Fe cation contacts are provided by His-487, Asp-489, and His-548. Residue Arg-557 participates in 2-oxoglutarate binding. The segment at 678–723 is disordered; that stretch reads RTTSLQSISDHFRSERSHERRSSTSSDQDLDEGLPPPPSTNPEYYI. The span at 687–699 shows a compositional bias: basic and acidic residues; sequence DHFRSERSHERRS.

Interacts (via catalytic domain) with lin-10 (via N-terminus); the interaction regulates lin-10 subcellular localization; the interaction is direct. Interacts (via catalytic domain) with swan-1 (via WD 1-3 repeats); the interaction may regulate vhl-1-independent hif-1 transcriptional activity; the interaction is direct. Interacts (via C-terminus) with cysl-1; the interaction is enhanced by hydrogen disulfide and activates hif-1-mediated transcription; the interaction is direct. It depends on Fe(2+) as a cofactor. Requires L-ascorbate as cofactor. In larvae and adults, expressed in pharyngeal and body wall muscles.

The protein localises to the cytoplasm. It is found in the nucleus. Its subcellular location is the cell projection. The protein resides in the dendrite. It localises to the axon. The enzyme catalyses L-prolyl-[hypoxia-inducible factor alpha subunit] + 2-oxoglutarate + O2 = trans-4-hydroxy-L-prolyl-[hypoxia-inducible factor alpha subunit] + succinate + CO2. With respect to regulation, inhibited by Co(2+) and dimethyloxalylglycine. Inhibited by the iron chelator 2, 2'-dipyridyl. Its function is as follows. Cellular oxygen sensor which regulates the stability and the activity of hypoxia-inducible transcription factor, hif-1. In normoxic conditions, hydroxylates hif-1 targeting it for vhl-1-mediated proteasomal degradation. In addition, regulates hif-1 transcriptional activity in a vhl-1-independent manner and independently of its hydroxylase activity. By regulating hif-1 activity, controls several cellular responses. Mediates susceptibility to B.thuringiensis and V.cholerae pore-forming toxins and enteropathogenic E.coli. Mediates susceptibility to P.aeruginosa PAO1-mediated killing by regulating resistance to cyanide produced by P.aeruginosa. Mediates resistance to S.aureus-mediated killing. In addition, plays a role in heat acclimation, neuronal development, behavioral responses to reoxygenation and hydrogen sulfide, iron homeostasis and aging. In neurons, involved in mitochondrion fusion during reoxygenation. Involved in egg laying. Regulates the trafficking of the glutamate receptor glr-1, probably independently of hif-1, by regulating lin-10 subcellular localization in response to oxygen levels. May hydroxylate lin-10. The protein is Hypoxia-inducible factor prolyl hydroxylase of Caenorhabditis elegans.